The chain runs to 193 residues: Imidazoleglycerol-phosphate dehydratase (193 aa).

It belongs to the imidazoleglycerol-phosphate dehydratase family.

The protein resides in the cytoplasm. The enzyme catalyses D-erythro-1-(imidazol-4-yl)glycerol 3-phosphate = 3-(imidazol-4-yl)-2-oxopropyl phosphate + H2O. It participates in amino-acid biosynthesis; L-histidine biosynthesis; L-histidine from 5-phospho-alpha-D-ribose 1-diphosphate: step 6/9. In Metallosphaera sedula (strain ATCC 51363 / DSM 5348 / JCM 9185 / NBRC 15509 / TH2), this protein is Imidazoleglycerol-phosphate dehydratase.